The primary structure comprises 197 residues: Ras-related protein Rab-7B (197 aa).

GTP is bound by residues 14 to 21 (GEKSVGKT), 33 to 38 (VTLKPT), 57 to 61 (DTSGQ), 119 to 122 (NKID), and 152 to 153 (AK). The short motif at 31–39 (RFVTLKPTI) is the Effector region element. S-geranylgeranyl cysteine attachment occurs at residues Cys196 and Cys197.

The protein belongs to the small GTPase superfamily. Rab family.

In terms of biological role, protein transport. Probably involved in vesicular traffic. The protein is Ras-related protein Rab-7B (rab7B) of Dictyostelium discoideum (Social amoeba).